A 327-amino-acid polypeptide reads, in one-letter code: Phenylalanine--tRNA ligase alpha subunit (327 aa).

Glu-252 lines the Mg(2+) pocket.

Belongs to the class-II aminoacyl-tRNA synthetase family. Phe-tRNA synthetase alpha subunit type 1 subfamily. As to quaternary structure, tetramer of two alpha and two beta subunits. The cofactor is Mg(2+).

It localises to the cytoplasm. The enzyme catalyses tRNA(Phe) + L-phenylalanine + ATP = L-phenylalanyl-tRNA(Phe) + AMP + diphosphate + H(+). The chain is Phenylalanine--tRNA ligase alpha subunit from Aeromonas salmonicida (strain A449).